The following is a 714-amino-acid chain: Fimbrin-3 (714 aa).

The 49-residue stretch at 7–55 folds into the EF-hand domain; that stretch reads VIVSDPWLQSQLTQVELRSLNSKFVALKNQSGKVTLEDLPSVLVKVKSL. Calponin-homology (CH) domains are found at residues 124–241, 269–372, 393–499, and 514–622; these read QSEK…KIQL, LPPE…HERN, CRDE…RTHM, and DMTD…YWSL. Actin-binding stretches follow at residues 124-372 and 393-622; these read QSEK…HERN and CRDE…YWSL. The span at 628 to 662 shows a compositional bias: low complexity; the sequence is SSESSSSSSDSSSTHSTTTTCTSTCTSTDASPAPS. The disordered stretch occupies residues 628–694; that stretch reads SSESSSSSSD…NEVSSLTIEE (67 aa). A compositionally biased stretch (polar residues) spans 670 to 680; that stretch reads SSLNGEVSSLT. The span at 681 to 694 shows a compositional bias: acidic residues; that stretch reads IEEDNEVSSLTIEE.

Interacts with F-actin.

It localises to the cytoplasm. It is found in the cytoskeleton. Functionally, cross-links actin filaments (F-actin). Stabilizes and prevents F-actin depolymerization mediated by profilin. May regulate actin cytoarchitecture, cell cycle, cell division, cell elongation and cytoplasmic tractus. The chain is Fimbrin-3 from Arabidopsis thaliana (Mouse-ear cress).